The following is a 214-amino-acid chain: Thymidylate kinase (214 aa).

7-14 (GIDGAGKS) is a binding site for ATP.

It belongs to the thymidylate kinase family.

It catalyses the reaction dTMP + ATP = dTDP + ADP. Its function is as follows. Phosphorylation of dTMP to form dTDP in both de novo and salvage pathways of dTTP synthesis. The protein is Thymidylate kinase of Chlorobium luteolum (strain DSM 273 / BCRC 81028 / 2530) (Pelodictyon luteolum).